A 322-amino-acid polypeptide reads, in one-letter code: Malate dehydrogenase (322 aa).

NAD(+)-binding positions include 10-15 (GSGQIG) and D34. Substrate contacts are provided by R83 and R89. NAD(+) contacts are provided by residues N96 and 119–121 (ITN). Substrate-binding residues include N121 and R152. H176 (proton acceptor) is an active-site residue.

Belongs to the LDH/MDH superfamily. MDH type 3 family.

It catalyses the reaction (S)-malate + NAD(+) = oxaloacetate + NADH + H(+). Catalyzes the reversible oxidation of malate to oxaloacetate. The chain is Malate dehydrogenase from Bradyrhizobium sp. (strain BTAi1 / ATCC BAA-1182).